The primary structure comprises 216 residues: MTQDNDAKFIEQGRKLFAGDWQFIWASPSIETLPPMAGLEVAFAGRSNVGKSSLINALTGRNALARTSHTPGRTQELIFFEGPENANFRLVDMPGYGYASAPKAKIASWTSLIHNFLQGRSTLARVYVLIDARHGLKEVDQDVLNTLDKSAVSYQVVLTKADQVKPAELAQCRIDVEAGLRKHPAAYPELLVTSSRTGAGMPELRAAMIKLIAERS.

An EngB-type G domain is found at alanine 37–glutamate 214. GTP-binding positions include glycine 45–serine 52, glycine 72–glutamate 76, aspartate 92–glycine 95, threonine 159–aspartate 162, and threonine 193–serine 195. Mg(2+)-binding residues include serine 52 and threonine 74.

The protein belongs to the TRAFAC class TrmE-Era-EngA-EngB-Septin-like GTPase superfamily. EngB GTPase family. Mg(2+) is required as a cofactor.

In terms of biological role, necessary for normal cell division and for the maintenance of normal septation. This is Probable GTP-binding protein EngB from Rhodopseudomonas palustris (strain BisB18).